The following is a 231-amino-acid chain: Ribosyldihydronicotinamide dehydrogenase [quinone] (231 aa).

FAD contacts are provided by residues His-12, 18 to 21 (FNGS), and 104 to 107 (LYWF). Substrate is bound at residue 127–129 (FDI). Residues 148–151 (TTGG) and Tyr-156 each bind FAD. Zn(2+) is bound by residues His-174 and His-178. Asp-194 is an FAD binding site. Ser-197 carries the post-translational modification Phosphoserine. Arg-201 provides a ligand contact to FAD. Residue Cys-223 coordinates Zn(2+).

Belongs to the NAD(P)H dehydrogenase (quinone) family. As to quaternary structure, homodimer. Requires Zn(2+) as cofactor. The cofactor is FAD.

It localises to the cytoplasm. It carries out the reaction 1-(beta-D-ribofuranosyl)-1,4-dihydronicotinamide + a quinone + H(+) = beta-nicotinamide D-riboside + a quinol. The enzyme apparently serves as a quinone reductase in connection with conjugation reactions of hydroquinones involved in detoxification pathways as well as in biosynthetic processes such as the vitamin K-dependent gamma-carboxylation of glutamate residues in prothrombin synthesis. This chain is Ribosyldihydronicotinamide dehydrogenase [quinone] (Nqo2), found in Mus musculus (Mouse).